A 361-amino-acid polypeptide reads, in one-letter code: Alanine racemase (361 aa).

The active-site Proton acceptor; specific for D-alanine is the Lys-35. Lys-35 is subject to N6-(pyridoxal phosphate)lysine. Arg-130 is a substrate binding site. The Proton acceptor; specific for L-alanine role is filled by Tyr-257. Met-305 is a binding site for substrate.

It belongs to the alanine racemase family. It depends on pyridoxal 5'-phosphate as a cofactor.

The catalysed reaction is L-alanine = D-alanine. It participates in amino-acid biosynthesis; D-alanine biosynthesis; D-alanine from L-alanine: step 1/1. In terms of biological role, catalyzes the interconversion of L-alanine and D-alanine. May also act on other amino acids. In Nitrosomonas eutropha (strain DSM 101675 / C91 / Nm57), this protein is Alanine racemase (alr).